We begin with the raw amino-acid sequence, 348 residues long: Dihydroorotate dehydrogenase (quinone) (348 aa).

Residues 60–64 (AGLDK) and threonine 84 contribute to the FMN site. Position 64 (lysine 64) interacts with substrate. 109–113 (NRMGF) is a binding site for substrate. Asparagine 137 and asparagine 170 together coordinate FMN. Residue asparagine 170 coordinates substrate. Serine 173 serves as the catalytic Nucleophile. A substrate-binding site is contributed by asparagine 175. Residues lysine 215 and threonine 243 each contribute to the FMN site. A substrate-binding site is contributed by 244–245 (NT). FMN is bound by residues glycine 266, glycine 295, and 316 to 317 (YS).

This sequence belongs to the dihydroorotate dehydrogenase family. Type 2 subfamily. In terms of assembly, monomer. FMN is required as a cofactor.

It is found in the cell membrane. It catalyses the reaction (S)-dihydroorotate + a quinone = orotate + a quinol. It functions in the pathway pyrimidine metabolism; UMP biosynthesis via de novo pathway; orotate from (S)-dihydroorotate (quinone route): step 1/1. Its function is as follows. Catalyzes the conversion of dihydroorotate to orotate with quinone as electron acceptor. This is Dihydroorotate dehydrogenase (quinone) from Nitrosospira multiformis (strain ATCC 25196 / NCIMB 11849 / C 71).